Reading from the N-terminus, the 1376-residue chain is Zinc finger MYM-type protein 2 (1376 aa).

The segment covering 30–53 (NVGNSFSGPPNPLVSRSSKFQNSS) has biased composition (polar residues). Disordered regions lie at residues 30–56 (NVGN…SVED) and 85–158 (TSSK…FSSS). Glycyl lysine isopeptide (Lys-Gly) (interchain with G-Cter in SUMO2) cross-links involve residues K48, K88, K98, and K104. The segment covering 127-138 (TNQGQEKSSSNF) has biased composition (polar residues). Basic and acidic residues predominate over residues 139–152 (IERRPSETKNRTND). Glycyl lysine isopeptide (Lys-Gly) (interchain with G-Cter in SUMO2) cross-links involve residues K147, K253, and K297. Residues 269–304 (DVFQNGESAPHHNPDSWISQSASFPRNQKQQGVDSL) form a disordered region. Polar residues predominate over residues 284–302 (SWISQSASFPRNQKQQGVD). S305 carries the phosphoserine modification. Glycyl lysine isopeptide (Lys-Gly) (interchain with G-Cter in SUMO2) cross-links involve residues K312, K324, K347, and K365. The segment at 326–362 (VKVTCANCKKPLQKGQTAYQRKGSAHLFCSTTCLSSF) adopts an MYM-type 1 zinc-finger fold. An MYM-type 2 zinc finger spans residues 368–408 (PKKLCVMCKKDITTMKGTIVAQVDSSESFQEFCSTSCLSLY). Residues K416, K440, K490, K502, K512, K528, and K531 each participate in a glycyl lysine isopeptide (Lys-Gly) (interchain with G-Cter in SUMO2) cross-link. MYM-type zinc fingers lie at residues 420-455 (NKSR…FNRY) and 462-501 (IMNC…VTEY). The MYM-type 5 zinc-finger motif lies at 532–569 (LTTCTGCRTQCRFFDMTQCIGPNGYMEPYCSTACMNSH). Residues K575, K602, K648, K657, K687, K699, and K708 each participate in a glycyl lysine isopeptide (Lys-Gly) (interchain with G-Cter in SUMO2) cross-link. The segment at 635–670 (QLKCNYCKNSFCSKPEILEWENKVHQFCSKTCSDDY) adopts an MYM-type 6 zinc-finger fold. 2 MYM-type zinc fingers span residues 722-757 (RCVT…CKKF) and 763-798 (KAAR…LLRF). Glycyl lysine isopeptide (Lys-Gly) (interchain with G-Cter in SUMO2) cross-links involve residues K763, K787, K811, and K828. Phosphoserine is present on S837. Positions 1027–1063 (VFGEEYEEQPRPRSKKKGTKRKAVSGYQSHDDSSDNS) are disordered. Over residues 1038 to 1049 (PRSKKKGTKRKA) the composition is skewed to basic residues. S1063 carries the phosphoserine modification. Residue T1375 is modified to Phosphothreonine.

As to quaternary structure, can form homodimers. May be a component of a BHC histone deacetylase complex that contains HDAC1, HDAC2, HMG20B/BRAF35, KDM1A, RCOR1/CoREST, PHF21A/BHC80, ZMYM2, ZNF217, ZMYM3, GSE1 and GTF2I. Interacts with FOXP1 and FOXP2. As to expression, low but widespread expression is detected in the developing kidney.

It localises to the nucleus. Involved in the negative regulation of transcription. In Mus musculus (Mouse), this protein is Zinc finger MYM-type protein 2 (Zmym2).